Reading from the N-terminus, the 208-residue chain is Uracil phosphoribosyltransferase (208 aa).

5-phospho-alpha-D-ribose 1-diphosphate-binding positions include R78, R103, and 130-138; that span reads DPMFATGGT. Residues I193 and 198 to 200 each bind uracil; that span reads GDA. D199 is a 5-phospho-alpha-D-ribose 1-diphosphate binding site.

This sequence belongs to the UPRTase family. Mg(2+) is required as a cofactor.

It carries out the reaction UMP + diphosphate = 5-phospho-alpha-D-ribose 1-diphosphate + uracil. It functions in the pathway pyrimidine metabolism; UMP biosynthesis via salvage pathway; UMP from uracil: step 1/1. Its activity is regulated as follows. Allosterically activated by GTP. Catalyzes the conversion of uracil and 5-phospho-alpha-D-ribose 1-diphosphate (PRPP) to UMP and diphosphate. The protein is Uracil phosphoribosyltransferase of Campylobacter concisus (strain 13826).